Reading from the N-terminus, the 806-residue chain is Plasminogen (806 aa).

A signal peptide spans 1 to 19 (MEYGKVIFLFLLFLKSGQG). Residues 20-98 (ESLENYIKTE…RDVVLFEKRI (79 aa)) enclose the PAN domain. 21 disulfides stabilise this stretch: cysteine 49–cysteine 73, cysteine 53–cysteine 61, cysteine 103–cysteine 181, cysteine 124–cysteine 164, cysteine 152–cysteine 176, cysteine 185–cysteine 262, cysteine 188–cysteine 316, cysteine 206–cysteine 245, cysteine 234–cysteine 257, cysteine 275–cysteine 352, cysteine 296–cysteine 335, cysteine 324–cysteine 347, cysteine 371–cysteine 448, cysteine 392–cysteine 431, cysteine 420–cysteine 443, cysteine 476–cysteine 555, cysteine 497–cysteine 538, cysteine 526–cysteine 550, cysteine 563–cysteine 681, cysteine 573–cysteine 581, and cysteine 603–cysteine 619. Kringle domains follow at residues 102 to 181 (DCKS…VPEC), 184 to 262 (ECMH…IPRC), 274 to 352 (QCLK…IPSC), 370 to 448 (ECYE…LEKC), and 475 to 555 (DCMY…IPQC). One can recognise a Peptidase S1 domain in the interval 577-804 (IVGGCYAQPH…YISWIEDVMK (228 aa)). Phosphoserine is present on serine 593. Residues histidine 618 and aspartate 661 each act as charge relay system in the active site. Serine 684 carries the post-translational modification Phosphoserine. Intrachain disulfides connect cysteine 695–cysteine 762, cysteine 725–cysteine 741, and cysteine 752–cysteine 780. Serine 756 serves as the catalytic Charge relay system.

This sequence belongs to the peptidase S1 family. Plasminogen subfamily. In terms of assembly, interacts with CSPG4 and AMOT. Interacts (via the Kringle domains) with HRG; the interaction tethers PLG to the cell surface and enhances its activation. Interacts (via Kringle 4 domain) with ADA; the interaction stimulates PLG activation when in complex with DPP4. Angiostatin: Interacts with ATP5F1A; the interaction inhibits most of the angiogenic effects of angiostatin. In terms of processing, in the presence of the inhibitor, the activation involves only cleavage after Arg-576, yielding two chains held together by two disulfide bonds. In the absence of the inhibitor, the activation involves additionally the removal of the activation peptide.

It is found in the secreted. The enzyme catalyses Preferential cleavage: Lys-|-Xaa &gt; Arg-|-Xaa, higher selectivity than trypsin. Converts fibrin into soluble products.. Its activity is regulated as follows. Converted into plasmin by plasminogen activators, both plasminogen and its activator being bound to fibrin. Activated with catalytic amounts of streptokinase. In terms of biological role, plasmin dissolves the fibrin of blood clots and acts as a proteolytic factor in a variety of other processes including embryonic development, tissue remodeling, tumor invasion, and inflammation. In ovulation, weakens the walls of the Graafian follicle. It activates the urokinase-type plasminogen activator, collagenases and several complement zymogens, such as C1, C4 and C5. Cleavage of fibronectin and laminin leads to cell detachment and apoptosis. Also cleaves fibrin, thrombospondin and von Willebrand factor. Its role in tissue remodeling and tumor invasion may be modulated by CSPG4. Binds to cells. The sequence is that of Plasminogen (PLG) from Notamacropus eugenii (Tammar wallaby).